We begin with the raw amino-acid sequence, 546 residues long: Chaperonin GroEL 1 (546 aa).

ATP is bound by residues 30 to 33 (TLGP), lysine 51, 87 to 91 (DGTTT), glycine 415, 479 to 481 (NAA), and aspartate 495. The disordered stretch occupies residues 526-546 (KEDAPMPGGMPGGMGGMGMDM). Positions 534–546 (GMPGGMGGMGMDM) are enriched in gly residues.

The protein belongs to the chaperonin (HSP60) family. As to quaternary structure, forms a cylinder of 14 subunits composed of two heptameric rings stacked back-to-back. Interacts with the co-chaperonin GroES.

It localises to the cytoplasm. The enzyme catalyses ATP + H2O + a folded polypeptide = ADP + phosphate + an unfolded polypeptide.. Functionally, together with its co-chaperonin GroES, plays an essential role in assisting protein folding. The GroEL-GroES system forms a nano-cage that allows encapsulation of the non-native substrate proteins and provides a physical environment optimized to promote and accelerate protein folding. The protein is Chaperonin GroEL 1 of Burkholderia pseudomallei (strain K96243).